A 250-amino-acid polypeptide reads, in one-letter code: MATKQAHKRLTKEYKLMVENPPPYILARPNEDNILEWHYIITGPADTPYKGGQYHGTLTFPSDYPYKPPAIRMITPNGRFKPNTRLCLSMSDYHPDTWNPGWSVSTILNGLLSFMTSDEATTGSITTSDHQKKTLARNSISYNTFQNVRFKLIFPEVVQENVETLEKRKLDEGDAANTGDETEDPFTKAAKEKVISLEEILDPEDRIRAEQALRQSENNSKKDGKEPNDSSSMVYIGIAIFLFLVGLFMK.

Over 1-232 the chain is Cytoplasmic; it reads MATKQAHKRL…DGKEPNDSSS (232 aa). Positions 5 to 167 constitute a UBC core domain; it reads QAHKRLTKEY…VQENVETLEK (163 aa). The Glycyl thioester intermediate role is filled by C87. The residue at position 139 (S139) is a Phosphoserine. T178 is subject to Phosphothreonine. The tract at residues 209-229 is disordered; it reads AEQALRQSENNSKKDGKEPND. Residues 219-228 show a composition bias toward basic and acidic residues; it reads NSKKDGKEPN. The helical transmembrane segment at 233-249 threads the bilayer; sequence MVYIGIAIFLFLVGLFM.

It belongs to the ubiquitin-conjugating enzyme family.

It localises to the endoplasmic reticulum membrane. It catalyses the reaction S-ubiquitinyl-[E1 ubiquitin-activating enzyme]-L-cysteine + [E2 ubiquitin-conjugating enzyme]-L-cysteine = [E1 ubiquitin-activating enzyme]-L-cysteine + S-ubiquitinyl-[E2 ubiquitin-conjugating enzyme]-L-cysteine.. Its pathway is protein modification; protein ubiquitination. Its function is as follows. Catalyzes the covalent attachment of ubiquitin to other proteins. Functions in degradation of misfolded or regulated proteins localized in the endoplasmic reticulum (ER) lumen or membrane via the ubiquitin-proteasome system. Cognate E2 conjugating enzyme for the DOA10 ubiquitin ligase complex, which is part of the ERAD-C pathway responsible for the rapid degradation of membrane proteins with misfolded cytoplasmic domains. The chain is Ubiquitin-conjugating enzyme E2 6 (UBC6) from Saccharomyces cerevisiae (strain ATCC 204508 / S288c) (Baker's yeast).